The sequence spans 429 residues: Ribonuclease E/G-like protein (429 aa).

Mg(2+) contacts are provided by aspartate 290 and aspartate 332.

The protein belongs to the RNase E/G family. Mg(2+) is required as a cofactor.

It is found in the plastid. The protein localises to the chloroplast stroma. Functionally, involved in intercistronic processing of primary transcripts from chloroplast operons. The endonucleolytic activity of the enzyme depends on the number of phosphates at the 5' end, is inhibited by structured RNA, and preferentially cleaves A/U-rich sequences. This is Ribonuclease E/G-like protein (rne) from Guillardia theta (Cryptophyte).